We begin with the raw amino-acid sequence, 121 residues long: UPF0102 protein BDI_2565 (121 aa).

The protein belongs to the UPF0102 family.

The chain is UPF0102 protein BDI_2565 from Parabacteroides distasonis (strain ATCC 8503 / DSM 20701 / CIP 104284 / JCM 5825 / NCTC 11152).